A 103-amino-acid chain; its full sequence is Omega toxin Ap5 (103 aa).

The N-terminal stretch at 1-22 (MNTIQVILFAVVLVLTVTVGQA) is a signal peptide. A propeptide spanning residues 23–57 (DEDSAETSLLRKLEEAEASMFGQYLEESKNSREKR) is cleaved from the precursor. 3 cysteine pairs are disulfide-bonded: Cys-58–Cys-73, Cys-65–Cys-78, and Cys-72–Cys-93.

Belongs to the neurotoxin 14 (magi-1) family. 08 (Ltx-4) subfamily. Expressed by the venom duct.

It is found in the secreted. In terms of biological role, shows a weak inhibition on the voltage-gated calcium channel Cav2.1/CACNA1A and some voltage-gated sodium channels (with 1 uM toxin tested: 22.08% inhibition on Cav2.1/CACNA1A, 6.6% on Nav1.1/SCN1A, 4.2% on Nav1.5, and 16% on Nav1.7). Functionally, shows a weak inhibition on the voltage-gated calcium channel Cav2.1/CACNA1A (28.06% at 1 uM). This Acanthoscurria paulensis (Brazilian giant black tarantula spider) protein is Omega toxin Ap5.